The sequence spans 578 residues: Potassium-transporting ATPase potassium-binding subunit (578 aa).

10 helical membrane-spanning segments follow: residues 3–23, 65–85, 134–154, 175–195, 261–281, 293–313, 397–417, 435–455, 503–523, and 543–563; these read NAILQYSLYLIILVLLAIPLG, SFSVLAFSAVGFIFLFALNLL, GLTVQNFLSAGVGIAVLFALI, IVLYLLVPLSIVLSILLVSQG, FSNLLEMLSILLIPAALCFTF, AIFIAMFTLLIIALCIIGVSE, GLYGMIAFAIITVFIAGLMVG, AMLICLATPISILIGSALASI, IGLIMLFVRFVPMIATLAIAG, and LLFIGLLIFVVLLVGALSFFP.

Belongs to the KdpA family. As to quaternary structure, the system is composed of three essential subunits: KdpA, KdpB and KdpC.

The protein resides in the cell membrane. Part of the high-affinity ATP-driven potassium transport (or Kdp) system, which catalyzes the hydrolysis of ATP coupled with the electrogenic transport of potassium into the cytoplasm. This subunit binds the extracellular potassium ions and delivers the ions to the membrane domain of KdpB through an intramembrane tunnel. This Clostridium perfringens (strain ATCC 13124 / DSM 756 / JCM 1290 / NCIMB 6125 / NCTC 8237 / Type A) protein is Potassium-transporting ATPase potassium-binding subunit.